We begin with the raw amino-acid sequence, 297 residues long: MSYGPQLPAFLMKGQIKENEVDDEAEEGAPQVYGPVIPGMEEPKNEKEKHDDQEETSVFGPSIPKEVREKLQNVENPAEDDEEDEEFPSQSYGPSIPSNFRPTVGPSIPGTFGDDSDEDIGPMPVAKGDEEKEAIDRAYRMVLQKEAEDDEKNFQPKREEWMTSVPKKLGNFGLGARTFKKGTTSERDASWEDAPGAKKRRNEETRSARSVGIAAADARQAAIVAEKTSGPSLLEIHQKKRDEKVKDAGYAQGERRPFDREKDMEVRGLKPGGSKEAVDRMKEFADRFANSKDQRFL.

Disordered regions lie at residues asparagine 19–glutamate 133, alanine 147–alanine 214, and glutamate 226–alanine 277. A compositionally biased stretch (basic and acidic residues) spans glutamate 41–aspartate 52. Over residues proline 77 to phenylalanine 87 the composition is skewed to acidic residues. The segment covering proline 88–arginine 101 has biased composition (polar residues). Basic and acidic residues-rich tracts occupy residues alanine 147–tryptophan 161 and isoleucine 236–glycine 268.

This is an uncharacterized protein from Caenorhabditis elegans.